The primary structure comprises 132 residues: Small ribosomal subunit protein uS8 (132 aa).

The protein belongs to the universal ribosomal protein uS8 family. In terms of assembly, part of the 30S ribosomal subunit. Contacts proteins S5 and S12.

Its function is as follows. One of the primary rRNA binding proteins, it binds directly to 16S rRNA central domain where it helps coordinate assembly of the platform of the 30S subunit. The protein is Small ribosomal subunit protein uS8 of Bifidobacterium longum (strain NCC 2705).